The following is a 237-amino-acid chain: Small ribosomal subunit protein uS3 (237 aa).

The region spanning 39–107 (IRAYLMEELK…ETHLNIVEVR (69 aa)) is the KH type-2 domain. The segment at 213–237 (MASERRATESDNQGGGGRDRRRENA) is disordered.

The protein belongs to the universal ribosomal protein uS3 family. In terms of assembly, part of the 30S ribosomal subunit. Forms a tight complex with proteins S10 and S14.

Functionally, binds the lower part of the 30S subunit head. Binds mRNA in the 70S ribosome, positioning it for translation. The polypeptide is Small ribosomal subunit protein uS3 (Sinorhizobium fredii (strain NBRC 101917 / NGR234)).